Reading from the N-terminus, the 245-residue chain is 1-(5-phosphoribosyl)-5-[(5-phosphoribosylamino)methylideneamino] imidazole-4-carboxamide isomerase (245 aa).

Catalysis depends on Asp10, which acts as the Proton acceptor. Asp135 acts as the Proton donor in catalysis.

It belongs to the HisA/HisF family.

Its subcellular location is the cytoplasm. The catalysed reaction is 1-(5-phospho-beta-D-ribosyl)-5-[(5-phospho-beta-D-ribosylamino)methylideneamino]imidazole-4-carboxamide = 5-[(5-phospho-1-deoxy-D-ribulos-1-ylimino)methylamino]-1-(5-phospho-beta-D-ribosyl)imidazole-4-carboxamide. It participates in amino-acid biosynthesis; L-histidine biosynthesis; L-histidine from 5-phospho-alpha-D-ribose 1-diphosphate: step 4/9. This Methanosarcina barkeri (strain Fusaro / DSM 804) protein is 1-(5-phosphoribosyl)-5-[(5-phosphoribosylamino)methylideneamino] imidazole-4-carboxamide isomerase.